Reading from the N-terminus, the 77-residue chain is U10-lycotoxin-Ls1b (77 aa).

A signal peptide spans 1-20 (MKLIIFTGLVLFAIVSLIEA). The propeptide occupies 21-26 (EEESGR).

Belongs to the neurotoxin 19 (CSTX) family. 09 (U10-Lctx) subfamily. Post-translationally, contains 4 disulfide bonds. As to expression, expressed by the venom gland.

It localises to the secreted. This Lycosa singoriensis (Wolf spider) protein is U10-lycotoxin-Ls1b.